The chain runs to 456 residues: Endoglucanase A (456 aa).

An N-terminal signal peptide occupies residues 1–30; sequence MSRIRRFLATALAAATAGVGAIVTAIASAG. The tract at residues 31–322 is catalytic; that stretch reads PAHAYDSPFY…RAYELAMNAA (292 aa). The active site involves D113. 2 disulfides stabilise this stretch: C114/C159 and C267/C302. The active-site Proton donor is D151. The disordered stretch occupies residues 255-280; the sequence is SRNGNGPLGSEWCDPPGRATGTWSTT. D300 acts as the Nucleophile in catalysis. Positions 321 to 358 are disordered; it reads AAPPTYSPSPTPSTPSPSPSQSDPGSPSPSPSQPPAGR. Positions 323-355 are linker ('hinge') (Pro-Ser box); the sequence is PPTYSPSPTPSTPSPSPSQSDPGSPSPSPSQPP. The span at 325–338 shows a compositional bias: pro residues; the sequence is TYSPSPTPSTPSPS. The CBM2 domain occupies 353 to 456; sequence QPPAGRACEA…LSSSITCSAS (104 aa). C360 and C453 are joined by a disulfide.

Belongs to the glycosyl hydrolase 6 (cellulase B) family.

It catalyses the reaction Endohydrolysis of (1-&gt;4)-beta-D-glucosidic linkages in cellulose, lichenin and cereal beta-D-glucans.. The protein is Endoglucanase A (celA) of Thermobispora bispora (Microbispora bispora).